The primary structure comprises 115 residues: NADH-ubiquinone oxidoreductase chain 3 (115 aa).

3 consecutive transmembrane segments (helical) span residues 4–24, 55–75, and 86–106; these read IMVI…AFWL, FFLV…LLPI, and TMML…AYEW.

Belongs to the complex I subunit 3 family. Core subunit of respiratory chain NADH dehydrogenase (Complex I) which is composed of 45 different subunits. Interacts with TMEM186. Interacts with TMEM242.

Its subcellular location is the mitochondrion inner membrane. The enzyme catalyses a ubiquinone + NADH + 5 H(+)(in) = a ubiquinol + NAD(+) + 4 H(+)(out). Core subunit of the mitochondrial membrane respiratory chain NADH dehydrogenase (Complex I) which catalyzes electron transfer from NADH through the respiratory chain, using ubiquinone as an electron acceptor. Essential for the catalytic activity of complex I. The polypeptide is NADH-ubiquinone oxidoreductase chain 3 (Baiomys taylori (Northern pygmy mouse)).